We begin with the raw amino-acid sequence, 187 residues long: Flavin prenyltransferase LpdB (187 aa).

Residues 10-12 (GAS), serine 37, 88-91 (SMKT), and arginine 123 each bind FMN. Positions 153 and 169 each coordinate dimethylallyl phosphate.

It belongs to the UbiX/PAD1 family.

It catalyses the reaction dimethylallyl phosphate + FMNH2 = prenylated FMNH2 + phosphate. Functionally, involved in tannin degradation. Flavin prenyltransferase that catalyzes the synthesis of the prenylated FMN cofactor (prenyl-FMN) for gallate decarboxylase LpdC. The prenyltransferase is metal-independent and links a dimethylallyl moiety from dimethylallyl monophosphate (DMAP) to the flavin N5 and C6 atoms of FMN. In Lactiplantibacillus plantarum (strain ATCC BAA-793 / NCIMB 8826 / WCFS1) (Lactobacillus plantarum), this protein is Flavin prenyltransferase LpdB.